Here is a 645-residue protein sequence, read N- to C-terminus: Sentrin-specific protease 1 (645 aa).

Positions 1–200 (MDDIADRMRM…REIYRQLLQM (200 aa)) are interaction with CCAR2. Residues Ser-57, Ser-117, and Ser-157 each carry the phosphoserine modification. The interval 92–117 (QSANGQWRNSTPSSSSSLQKSRNSRS) is disordered. A compositionally biased stretch (low complexity) spans 99–117 (RNSTPSSSSSLQKSRNSRS). The Nuclear localization signal motif lies at 171–177 (PKKTQRR). Residues 285 to 313 (KDSGTLHHPHHHHSVPHQPDNLAASNTQS) form a disordered region. Protease stretches follow at residues 451-614 (LTIT…YADC) and 451-615 (LTIT…ADCI). Residues His-534 and Asp-551 contribute to the active site. Positions 575–578 (KKRK) match the Nuclear localization signal motif. Cys-604 serves as the catalytic Nucleophile. A Nuclear localization signal motif is present at residues 629–635 (PYFRKRM). Positions 636-645 (VWEILHRKLL) match the Nuclear export signal motif.

This sequence belongs to the peptidase C48 family. As to quaternary structure, interacts with RBM33; promoting ALKBH5 desumoylation and subsequent activation.

It localises to the nucleus. Its subcellular location is the cytoplasm. Its function is as follows. Protease that catalyzes two essential functions in the SUMO pathway. The first is the hydrolysis of an alpha-linked peptide bond at the C-terminal end of the small ubiquitin-like modifier (SUMO) propeptides, SUMO1, SUMO2 and SUMO3 leading to the mature form of the proteins. The second is the deconjugation of SUMO1, SUMO2 and SUMO3 from targeted proteins, by cleaving an epsilon-linked peptide bond between the C-terminal glycine of the mature SUMO and the lysine epsilon-amino group of the target protein. Deconjugates SUMO1 from HIPK2. Deconjugates SUMO1 from HDAC1 and BHLHE40/DEC1, which decreases its transcriptional repression activity. Deconjugates SUMO1 from CLOCK, which decreases its transcriptional activation activity. Deconjugates SUMO2 from MTA1. Inhibits N(6)-methyladenosine (m6A) RNA methylation by mediating SUMO1 deconjugation from METTL3 and ALKBH5: METTL3 inhibits the m6A RNA methyltransferase activity, while ALKBH5 desumoylation promotes m6A demethylation. Desumoylates CCAR2 which decreases its interaction with SIRT1. Deconjugates SUMO1 from GPS2. This Pongo abelii (Sumatran orangutan) protein is Sentrin-specific protease 1 (SENP1).